A 308-amino-acid polypeptide reads, in one-letter code: tRNA pseudouridine synthase B (308 aa).

Catalysis depends on D47, which acts as the Nucleophile.

It belongs to the pseudouridine synthase TruB family. Type 1 subfamily.

It carries out the reaction uridine(55) in tRNA = pseudouridine(55) in tRNA. Responsible for synthesis of pseudouridine from uracil-55 in the psi GC loop of transfer RNAs. The sequence is that of tRNA pseudouridine synthase B from Rhodospirillum rubrum (strain ATCC 11170 / ATH 1.1.1 / DSM 467 / LMG 4362 / NCIMB 8255 / S1).